The sequence spans 475 residues: Putative F-box protein At1g46840 (475 aa).

Positions 25-71 (TYVLEKLHIDLVIEILSRLSAKSIAICRCVSKQWNSLLVSQDFVESF) constitute an F-box domain. Residues 423-433 (SSYSTTRSYKS) are compositionally biased toward low complexity. The disordered stretch occupies residues 423-475 (SSYSTTRSYKSSGKRCSDRSIGEDEQDDIGEKRGDQAAERRERSTKRGKHEVH). Residues 451 to 464 (IGEKRGDQAAERRE) show a composition bias toward basic and acidic residues. Residues 465-475 (RSTKRGKHEVH) show a composition bias toward basic residues.

The polypeptide is Putative F-box protein At1g46840 (Arabidopsis thaliana (Mouse-ear cress)).